A 91-amino-acid polypeptide reads, in one-letter code: Uteroglobin (91 aa).

Residues 1–21 (MKLAITITLAILALCCSPASA) form the signal peptide.

It belongs to the secretoglobin family. In terms of assembly, antiparallel homodimer; disulfide-linked. Interaction with LMBR1L is controversial. As to expression, club cells (nonciliated cells of the surface epithelium of the pulmonary airways). Expressed in lung, uterus, and prostate.

It localises to the secreted. Its function is as follows. Binds phosphatidylcholine, phosphatidylinositol, polychlorinated biphenyls (PCB) and weakly progesterone, potent inhibitor of phospholipase A2. This is Uteroglobin (SCGB1A1) from Equus caballus (Horse).